We begin with the raw amino-acid sequence, 509 residues long: Solute carrier family 2, facilitated glucose transporter member 4 (509 aa).

The Cytoplasmic portion of the chain corresponds to 1-24 (MPSGFQQIGSEDGEPPRQRVTGTL). The interaction with SRFBP1 stretch occupies residues 7–13 (QIGSEDG). Serine 10 carries the post-translational modification Phosphoserine. Residues 25-45 (VLAVFSAVLGSLQFGYNIGVI) form a helical membrane-spanning segment. The Extracellular segment spans residues 46–81 (NAPQKVIEQSYNETWLGRQGPEGPGSIPPGTLTTLW). Asparagine 57 carries N-linked (GlcNAc...) asparagine glycosylation. The helical transmembrane segment at 82–102 (ALSVAIFSVGGMISSFLIGII) threads the bilayer. The Cytoplasmic portion of the chain corresponds to 103-111 (SQWLGRKRA). Residues 112 to 132 (MLFNNALAVLGGTLMGLAKAA) form a helical membrane-spanning segment. The Extracellular portion of the chain corresponds to 133–142 (ASYEMLILGR). Residues 143–163 (FFIGAYSGLTSGLVPMYVGEI) form a helical membrane-spanning segment. Residues 164-171 (APTHLRGA) lie on the Cytoplasmic side of the membrane. Residues 172–192 (LGTLNQLAIVTGILIAQVLGL) form a helical membrane-spanning segment. Glutamine 177 contacts D-glucose. Residues 193–200 (ESMLGTAT) lie on the Extracellular side of the membrane. A helical membrane pass occupies residues 201-221 (LWPLLLGITVLPALLQMVLLP). Residues 222–287 (LCPESPRYLY…LLGSHTHRQP (66 aa)) are Cytoplasmic-facing. The S-palmitoyl cysteine moiety is linked to residue cysteine 223. Phosphoserine; by SGK1 is present on serine 274. A helical transmembrane segment spans residues 288–308 (LVIAIVLQLSQQLSGINAVFY). Residues 298–299 (QQ) and asparagine 304 each bind D-glucose. The Extracellular portion of the chain corresponds to 309 to 323 (YSTSIFESAGVEKPA). The chain crosses the membrane as a helical span at residues 324-344 (YATIGAGVVNTVFTLVSVFLV). Residue asparagine 333 participates in D-glucose binding. Topologically, residues 345–353 (ERAGRRTLH) are cytoplasmic. The helical transmembrane segment at 354–374 (LLGLAGMCGCAILMTVALLLL) threads the bilayer. At 375–384 (ERVPAMSYVS) the chain is on the extracellular side. A helical transmembrane segment spans residues 385–405 (IVAIFGFVAFFEIGPGPIPWF). Positions 396 and 404 each coordinate D-glucose. Over 406–417 (IVAELFSQGPRP) the chain is Cytoplasmic. The helical transmembrane segment at 418 to 438 (AAMAVAGFSNWTCNFIIGMGF) threads the bilayer. Topologically, residues 439–445 (QYVADAM) are extracellular. A helical transmembrane segment spans residues 446–466 (GPYVFLLFAVLLLGFFIFTFL). At 467-509 (KVPETRGRTFDQISAVFHRTPSLLEQEVKPSTELEYLGPDEHD) the chain is on the cytoplasmic side. Position 486 is a phosphothreonine (threonine 486). Serine 488 bears the Phosphoserine mark. A Dileucine internalization motif motif is present at residues 489 to 490 (LL).

It belongs to the major facilitator superfamily. Sugar transporter (TC 2.A.1.1) family. Glucose transporter subfamily. Binds to DAXX. Interacts via its N-terminus with SRFBP1. Interacts with NDUFA9. Interacts with TRARG1; the interaction is required for proper SLC2A4 recycling after insulin stimulation. Sumoylated. In terms of processing, palmitoylated. Palmitoylation by ZDHHC7 controls the insulin-dependent translocation of GLUT4 to the plasma membrane.

It is found in the cell membrane. The protein localises to the endomembrane system. Its subcellular location is the cytoplasm. The protein resides in the perinuclear region. The catalysed reaction is D-glucose(out) = D-glucose(in). In terms of biological role, insulin-regulated facilitative glucose transporter, which plays a key role in removal of glucose from circulation. Response to insulin is regulated by its intracellular localization: in the absence of insulin, it is efficiently retained intracellularly within storage compartments in muscle and fat cells. Upon insulin stimulation, translocates from these compartments to the cell surface where it transports glucose from the extracellular milieu into the cell. The polypeptide is Solute carrier family 2, facilitated glucose transporter member 4 (Bos taurus (Bovine)).